A 145-amino-acid polypeptide reads, in one-letter code: 3-hydroxyacyl-[acyl-carrier-protein] dehydratase FabZ (145 aa).

Residue H49 is part of the active site.

The protein belongs to the thioester dehydratase family. FabZ subfamily.

It localises to the cytoplasm. It catalyses the reaction a (3R)-hydroxyacyl-[ACP] = a (2E)-enoyl-[ACP] + H2O. Involved in unsaturated fatty acids biosynthesis. Catalyzes the dehydration of short chain beta-hydroxyacyl-ACPs and long chain saturated and unsaturated beta-hydroxyacyl-ACPs. This Ehrlichia ruminantium (strain Gardel) protein is 3-hydroxyacyl-[acyl-carrier-protein] dehydratase FabZ.